The chain runs to 935 residues: MQQNKAFDDWLASTALGGANQSYIEELYESYLSDPQSVEESWRKTFDSLPKTTALEQPHTPVRDYFRRLARENHNEAVTVIDPAAGAKLVKVLQFINAYRFRGHLEANLDPLNYYRWKVSFVPELDYRHHGFTEQDLNETFNINHYVYKRDTIKLGELAQMLKETYCGSIGLEFMHVQDMEQKMWLQSKMESLLDKPLFTSEERVNFLRELTAADGLERYLGAKFPGAKRFSLEGSDAFIPLMKEIIRHSSRQGVNDVVMGMAHRGRLNMLVNVLGKKPENLFDEFAGKHSSERTGDVKYHQGFSSDFAVDDKRVHLTLAFNPSHLEIVSPVVIGSVRSRQTRMNDTEHSKVLAITVHGDSAVAGQGVVQETLNMSNTRGYSVGGTIRIVINNQIGFTTSNPNDTRSTEYCTDIAKMIQAPIIHVNGDDPEAVAFAARMAVEYRNLFKRDIFIDLISYRRHGHNEADEPLATQPMMYSIIKKHPTPRKVYADRLVSEGVMTEEQVTEMANDYRDALDNGDRVVSEWREMDTAKMDWLQYLNYDWTAPYESKFSQERFLTLAKRVCEYPESLRAHPRVEKIYNDRKAMYQGEKLLDWGMAETMAYATLLDEGVNVRLSGEDAGRGTFFHRHAVVHNQNDGTGYVPLTHLHANQGRFEVWDSVLSEESVLAFEYGYATTDPKTLTIWEAQFGDFANGAQIVIDQFISSGEQKWGRMCGLVMLLPHGYEGQGPEHSSARLERYLQLCAEQNMQVCVPSTPAQVYHMLRRQSLRKMRRPLIAISPKSLLRHPLAVSSLDELINGTFQTVIGEIDELDPKDVKRVVMCSGKVYYDLLEQRRANNQKDVAIIRIEQLYPFPHEDVKKALEPYAHVTDYVWCQEEPLNQGAWYCSKHNFESAIPESVKLKYAGRPASASPAVGYMSLHTKQQKQLVEDALSF.

Belongs to the alpha-ketoglutarate dehydrogenase family. As to quaternary structure, homodimer. Part of the 2-oxoglutarate dehydrogenase (OGDH) complex composed of E1 (2-oxoglutarate dehydrogenase), E2 (dihydrolipoamide succinyltransferase) and E3 (dihydrolipoamide dehydrogenase); the complex contains multiple copies of the three enzymatic components (E1, E2 and E3). Thiamine diphosphate is required as a cofactor.

It catalyses the reaction N(6)-[(R)-lipoyl]-L-lysyl-[protein] + 2-oxoglutarate + H(+) = N(6)-[(R)-S(8)-succinyldihydrolipoyl]-L-lysyl-[protein] + CO2. Functionally, E1 component of the 2-oxoglutarate dehydrogenase (OGDH) complex which catalyzes the decarboxylation of 2-oxoglutarate, the first step in the conversion of 2-oxoglutarate to succinyl-CoA and CO(2). This chain is 2-oxoglutarate dehydrogenase E1 component (sucA), found in Haemophilus influenzae (strain ATCC 51907 / DSM 11121 / KW20 / Rd).